A 142-amino-acid polypeptide reads, in one-letter code: Transcriptional regulator MraZ (142 aa).

SpoVT-AbrB domains lie at 5-48 and 77-120; these read EFEY…PLCE and AFDV…DKET.

Belongs to the MraZ family. As to quaternary structure, forms oligomers.

The protein resides in the cytoplasm. Its subcellular location is the nucleoid. In Dehalococcoides mccartyi (strain ATCC BAA-2266 / KCTC 15142 / 195) (Dehalococcoides ethenogenes (strain 195)), this protein is Transcriptional regulator MraZ.